The chain runs to 469 residues: Ribosomal protein uS12 methylthiotransferase RimO (469 aa).

The 111-residue stretch at 34–144 (NKIGFVSLGC…VLEHVHQFAP (111 aa)) folds into the MTTase N-terminal domain. Residues cysteine 43, cysteine 79, cysteine 108, cysteine 176, cysteine 180, and cysteine 183 each contribute to the [4Fe-4S] cluster site. The 238-residue stretch at 162–399 (LTPKHYAYLK…MLVQQEISAA (238 aa)) folds into the Radical SAM core domain. A TRAM domain is found at 402–468 (QKRIGSTMKV…EYDLWGSLVR (67 aa)).

Belongs to the methylthiotransferase family. RimO subfamily. The cofactor is [4Fe-4S] cluster.

It localises to the cytoplasm. The catalysed reaction is L-aspartate(89)-[ribosomal protein uS12]-hydrogen + (sulfur carrier)-SH + AH2 + 2 S-adenosyl-L-methionine = 3-methylsulfanyl-L-aspartate(89)-[ribosomal protein uS12]-hydrogen + (sulfur carrier)-H + 5'-deoxyadenosine + L-methionine + A + S-adenosyl-L-homocysteine + 2 H(+). Functionally, catalyzes the methylthiolation of an aspartic acid residue of ribosomal protein uS12. The polypeptide is Ribosomal protein uS12 methylthiotransferase RimO (Vibrio vulnificus (strain CMCP6)).